A 429-amino-acid chain; its full sequence is Adenosylhomocysteinase (429 aa).

Substrate is bound by residues Thr64, Asp136, and Glu161. Position 162–164 (162–164) interacts with NAD(+); it reads TTT. Substrate is bound by residues Lys191 and Asp195. NAD(+) is bound by residues Asn196, 225–230, Glu248, Asn283, 304–306, and Asn351; these read GYGWCG and SGH.

It belongs to the adenosylhomocysteinase family. The cofactor is NAD(+).

Its subcellular location is the cytoplasm. The enzyme catalyses S-adenosyl-L-homocysteine + H2O = L-homocysteine + adenosine. Its pathway is amino-acid biosynthesis; L-homocysteine biosynthesis; L-homocysteine from S-adenosyl-L-homocysteine: step 1/1. May play a key role in the regulation of the intracellular concentration of adenosylhomocysteine. This Thermosynechococcus vestitus (strain NIES-2133 / IAM M-273 / BP-1) protein is Adenosylhomocysteinase.